The following is a 97-amino-acid chain: Small ribosomal subunit protein bS20 (97 aa).

Belongs to the bacterial ribosomal protein bS20 family.

Functionally, binds directly to 16S ribosomal RNA. The chain is Small ribosomal subunit protein bS20 from Prochlorococcus marinus (strain MIT 9312).